We begin with the raw amino-acid sequence, 522 residues long: Tubulin-specific chaperone E (522 aa).

The CAP-Gly domain maps to 27-71; the sequence is GNVPPTPGLWLGVEWDNHLRGKHNGTHEGTKYFTCSHPTGGSFIR. LRR repeat units follow at residues 149 to 170, 175 to 196, 201 to 222, 226 to 248, 249 to 270, 274 to 295, and 303 to 324; these read NIMT…AHIS, NLTS…SSLA, NLKV…QCAS, ALEE…NNLQ, NLTI…HTIA, RLKQ…DVDF, and SLTS…NELH. The LRRCT domain occupies 337–379; sequence NPLMDLDKNPETVRQLIIAKIENLKFLNKTEIFPTERRGAELD.

The protein belongs to the TBCE family. In terms of assembly, supercomplex made of cofactors A to E. Cofactors A and D function by capturing and stabilizing tubulin in a quasi-native conformation. Cofactor E binds to the cofactor D-tubulin complex; interaction with cofactor C then causes the release of tubulin polypeptides that are committed to the native state.

The protein localises to the cytoplasm. It is found in the cytoskeleton. In terms of biological role, tubulin-folding protein; involved in the second step of the tubulin folding pathway. This Xenopus laevis (African clawed frog) protein is Tubulin-specific chaperone E (tbce).